The following is a 337-amino-acid chain: RAD51-associated protein 1 (337 aa).

Disordered regions lie at residues 1–69 and 88–337; these read MVRP…PPKK and LSVK…SQVR. 2 positions are modified to phosphoserine: Ser19 and Ser23. A compositionally biased stretch (polar residues) spans 28 to 38; sequence ISSSTPVNKSK. An interaction with DNA region spans residues 32–50; it reads TPVNKSKTVPKVLKQDKPK. Basic and acidic residues predominate over residues 44–69; that stretch reads LKQDKPKPNLKNLQKEEVLPTEPPKK. Phosphoserine is present on residues Ser103 and Ser107. The segment covering 105–118 has biased composition (basic and acidic residues); that stretch reads EKSTDKQGKEKTEN. Positions 138 to 143 match the SIM motif motif; sequence LDKITE. A compositionally biased stretch (acidic residues) spans 190–205; sequence SESDPDFDESKESDED. Positions 225–286 are interaction with DNA; it reads GEKKERKSKP…PSAESKRPKW (62 aa). Lys251 participates in a covalent cross-link: Glycyl lysine isopeptide (Lys-Gly) (interchain with G-Cter in SUMO; alternate). Lys251 is covalently cross-linked (Glycyl lysine isopeptide (Lys-Gly) (interchain with G-Cter in ubiquitin; alternate)). The WVPP motif signature appears at 286–289; it reads WVPP. Residues 290-304 show a composition bias toward low complexity; the sequence is AASGSRNSSSNALAG. The tract at residues 295–334 is interaction with RAD51; it reads RNSSSNALAGTPAKSPSQSLRLGLSRLAPVKRLHPSATSS. Ser309 is subject to Phosphoserine.

In terms of assembly, monomer; elongated monodisperse monomer. Interacts (via C-terminal region) with RAD51; the interaction is direct. Interacts (via SIM motif) with WDR48/UAF1; WDR48/UAF1 and RAD51AP1 cooperate together to stimulate RAD51-mediated homologous recombination (HR). Interacts (via WVPP motif) with DMC1; the interaction is direct. Interacts with PALB2. Interacts with RAD52. Post-translationally, sumoylation with SUMO2/3 by NSMCE2/MMS21 promotes stabilization, possibly by preventing ubiquitination. Most abundantly expressed in testis. Also expressed in spleen, thymus and bone marrow. Not detected in heart, kidney or liver.

The protein localises to the chromosome. The protein resides in the nucleus. Its subcellular location is the telomere. Functionally, structure-specific DNA-binding protein involved in DNA repair by promoting RAD51-mediated homologous recombination. Acts by stimulating D-Loop formation by RAD51: specifically enhances joint molecule formation through its structure-specific DNA interaction and its interaction with RAD51. Binds single-stranded DNA (ssDNA), double-stranded DNA (dsDNA) and secondary DNA structures, such as D-loop structures: has a strong preference for branched-DNA structures that are obligatory intermediates during joint molecule formation. Cooperates with WDR48/UAF1 to stimulate RAD51-mediated homologous recombination: both WDR48/UAF1 and RAD51AP1 have coordinated role in DNA-binding during homologous recombination and DNA repair. WDR48/UAF1 and RAD51AP1 also have a coordinated role in DNA-binding to promote USP1-mediated deubiquitination of FANCD2. Also involved in meiosis by promoting DMC1-mediated homologous meiotic recombination. In Mus musculus (Mouse), this protein is RAD51-associated protein 1.